Reading from the N-terminus, the 93-residue chain is Small ribosomal subunit protein bS16 (93 aa).

It belongs to the bacterial ribosomal protein bS16 family.

The polypeptide is Small ribosomal subunit protein bS16 (Opitutus terrae (strain DSM 11246 / JCM 15787 / PB90-1)).